The chain runs to 62 residues: Large ribosomal subunit protein bL33 (62 aa).

It belongs to the bacterial ribosomal protein bL33 family.

The sequence is that of Large ribosomal subunit protein bL33 from Acaryochloris marina (strain MBIC 11017).